A 78-amino-acid polypeptide reads, in one-letter code: CDC42 small effector protein 1 (78 aa).

S-palmitoyl cysteine attachment occurs at residues cysteine 10 and cysteine 11. One can recognise a CRIB domain in the interval 30–43; that stretch reads IGEPMNFVHLTHIG.

It belongs to the CDC42SE/SPEC family.

It localises to the cytoplasm. The protein resides in the cytoskeleton. It is found in the cell membrane. Functionally, probably involved in the organization of the actin cytoskeleton by acting downstream of CDC42, inducing actin filament assembly. In Gallus gallus (Chicken), this protein is CDC42 small effector protein 1 (CDC42SE1).